The following is a 622-amino-acid chain: Telomerase-associated protein of 75 kDa (622 aa).

Component of the telomerase holoenzyme complex, composed of the catalytic core (the catalytic subunit TERT, the telomerase RNA template component TER and TAP65/p65), which is associated with two heterotrimeric subcomplexes: (i) the replication protein A (RPA)-related subcomplex, composed of TEB1, RPA2/TEB2 and RPA3/TEB3 and (ii) the CST-like subcomplex, composed of TAP75/p75, TAP45/p45 and TAP19/p19. TEB1 and the CST-like subcomplex are tethered to the catalytic core by TAP50/p50.

The protein resides in the chromosome. It localises to the telomere. Its function is as follows. Component of a CST-like subcomplex of the holoenzyme telomerase ribonucleoprotein complex, which stimulates telomerase complementary-strand synthesis. Telomerase is an essential ribonucleoprotein enzyme that copies new telomeric repeats onto chromosome ends by repetitively synthesizing the short telomere-repeat sequence 5'-TTGGGG-3' using an RNA template component TER. The CST-like subcomplex (also named 7-4-1) binds telomeric single-stranded DNA and coordinates telomere G-strand and C-strand synthesis. In Tetrahymena thermophila (strain SB210), this protein is Telomerase-associated protein of 75 kDa.